A 401-amino-acid polypeptide reads, in one-letter code: Imidazolonepropionase (401 aa).

Residues His-66 and His-68 each contribute to the Fe(3+) site. Positions 66 and 68 each coordinate Zn(2+). Residues Arg-75, Tyr-138, and His-171 each contribute to the 4-imidazolone-5-propanoate site. Tyr-138 is an N-formimidoyl-L-glutamate binding site. His-236 serves as a coordination point for Fe(3+). Residue His-236 participates in Zn(2+) binding. Gln-239 contacts 4-imidazolone-5-propanoate. Asp-311 contacts Fe(3+). Asp-311 serves as a coordination point for Zn(2+). The N-formimidoyl-L-glutamate site is built by Asn-313 and Gly-315. Thr-316 lines the 4-imidazolone-5-propanoate pocket.

This sequence belongs to the metallo-dependent hydrolases superfamily. HutI family. Zn(2+) serves as cofactor. The cofactor is Fe(3+).

It is found in the cytoplasm. The catalysed reaction is 4-imidazolone-5-propanoate + H2O = N-formimidoyl-L-glutamate. The protein operates within amino-acid degradation; L-histidine degradation into L-glutamate; N-formimidoyl-L-glutamate from L-histidine: step 3/3. In terms of biological role, catalyzes the hydrolytic cleavage of the carbon-nitrogen bond in imidazolone-5-propanoate to yield N-formimidoyl-L-glutamate. It is the third step in the universal histidine degradation pathway. The protein is Imidazolonepropionase of Pseudomonas fluorescens (strain ATCC BAA-477 / NRRL B-23932 / Pf-5).